Reading from the N-terminus, the 988-residue chain is Chitin synthase 1 (988 aa).

Positions 29–75 are disordered; it reads QHHWPPSSGSSLGRAPSIPLSSSNPRSPIRPSTPSRVSTDWTRPPAP. Residues 44 to 66 are compositionally biased toward low complexity; sequence PSIPLSSSNPRSPIRPSTPSRVS. 7 consecutive transmembrane segments (helical) span residues 577-596, 616-636, 656-676, 732-752, 764-784, 864-884, and 911-931; these read WLNGAFFAAVYALVHFKQIW, FISLLFTFFSLANFYLTFYFV, IFVILRYVCVLLICLQFILSL, IFTNLIVSSVSTIGLFFLMSF, SAQYFALLPSYICTLQVYAFC, YVVASYMVCNAILAMAVSEAY, and AIGSSAFGVINIVSAIAEGRI. A disordered region spans residues 950-988; the sequence is AGLGSGFSESGKTGITSGSGMSGMSLSDVTSKISEKLAG. Low complexity predominate over residues 957–976; the sequence is SESGKTGITSGSGMSGMSLS.

It belongs to the chitin synthase family. Class II subfamily.

The protein resides in the cell membrane. The catalysed reaction is [(1-&gt;4)-N-acetyl-beta-D-glucosaminyl](n) + UDP-N-acetyl-alpha-D-glucosamine = [(1-&gt;4)-N-acetyl-beta-D-glucosaminyl](n+1) + UDP + H(+). Polymerizes chitin, a structural polymer of the cell wall and septum, by transferring the sugar moiety of UDP-GlcNAc to the non-reducing end of the growing chitin polymer. CHS1 mainly responsible for normal yeast cell reproductive growth. This is Chitin synthase 1 from Exophiala dermatitidis (Black yeast-like fungus).